A 305-amino-acid chain; its full sequence is Putative beta-lactamase HcpD (305 aa).

The first 27 residues, 1 to 27 (MIKSWTKKWFLILFLMASCFGHLVATT), serve as a signal peptide directing secretion. TPR repeat units follow at residues 28–61 (GEKY…RMGV), 96–133 (HLAC…KGGV), 168–205 (GISC…KDGA), and 240–277 (GSGC…GFSG). Intrachain disulfides connect Cys-55/Cys-63, Cys-91/Cys-99, Cys-127/Cys-135, Cys-163/Cys-171, Cys-199/Cys-207, Cys-235/Cys-243, and Cys-271/Cys-279.

It belongs to the hcp beta-lactamase family.

The protein resides in the secreted. The enzyme catalyses a beta-lactam + H2O = a substituted beta-amino acid. Functionally, may hydrolyze 6-aminopenicillinic acid and 7-aminocephalosporanic acid (ACA) derivatives. Binds to penicillin. This is Putative beta-lactamase HcpD (hcpD) from Helicobacter pylori (strain J99 / ATCC 700824) (Campylobacter pylori J99).